The sequence spans 107 residues: Basic phospholipase A2 sphenotoxin subunit B (107 aa).

3 residues coordinate Ca(2+): Tyr27, Gly29, and Gly31. Intrachain disulfides connect Cys28–Cys44, Cys43–Cys91, Cys50–Cys88, Cys57–Cys81, and Cys75–Cys86. Residue His47 is part of the active site. Asp48 is a Ca(2+) binding site. Asp89 is an active-site residue.

This sequence belongs to the phospholipase A2 family. Group II subfamily. D49 sub-subfamily. As to quaternary structure, heterodimer of A and B chains; non-covalently linked. The acidic protein (B chain) has phospholipase A2 activity and the A chain weakly inhibits the B chain enzymatic activity but potentiates its lethal potency. Expressed by the venom gland.

The protein localises to the secreted. The catalysed reaction is a 1,2-diacyl-sn-glycero-3-phosphocholine + H2O = a 1-acyl-sn-glycero-3-phosphocholine + a fatty acid + H(+). Heterodimer A-B: Sphenotoxin is a potent neurotoxin that possesses phospholipase A2 (PLA2) activity. It consists of a non-covalent association of a basic PLA2 subunit B with a non-enzymatic subunit A. Its function is as follows. Monomer B: Not found in vivo. In vitro, potent neurotoxin that possesses phospholipase A2 (PLA2) activity and exerts a lethal action by blocking neuromuscular transmission. Induces paralysis of the hind legs and neuromuscular blockade in mouse phrenic nerve-diaphragm preparations. PLA2 catalyzes the calcium-dependent hydrolysis of the 2-acyl groups in 3-sn-phosphoglycerides. This Ophryacus sphenophrys (Broad-horned pitviper) protein is Basic phospholipase A2 sphenotoxin subunit B.